An 88-amino-acid polypeptide reads, in one-letter code: Outer membrane protein H.8 (88 aa).

A signal peptide spans 1–17; sequence MKKSLFAAALLSLALAA. Cysteine 18 is lipidated: N-palmitoyl cysteine. Cysteine 18 carries S-diacylglycerol cysteine lipidation. Tandem repeats lie at residues 23–27, 28–32, 33–37, 38–42, 43–47, 48–52, 53–57, 58–62, 63–67, 68–72, 73–77, 78–82, and 83–87. Residues 23–87 form a 13 X 5 AA tandem repeats of [AS]-[AT]-E-A-[PAS] region; the sequence is AAEAPAAEAS…AAEAPAAEAA (65 aa). Positions 23 to 88 are disordered; sequence AAEAPAAEAS…AEAPAAEAAK (66 aa). Residues 25 to 88 show a composition bias toward low complexity; the sequence is EAPAAEASST…AEAPAAEAAK (64 aa).

It localises to the cell outer membrane. In Neisseria gonorrhoeae (strain ATCC 700825 / FA 1090), this protein is Outer membrane protein H.8.